The sequence spans 189 residues: MTKLVVGLGNPGSKYHETRHNVGFMAIDLMAKELGLTFSEEKTFKAEVASTFLNGEKVYFVKPTTFMNLSGLAVRALLAYYNIPMEDFIVIYDDLDMEVGKLRFRQKGSAGGHNGIKSIIAETGTQEFDRIKIGIGRPQKGMTVVNHVLGKFSEDDYAMILLTLDKVETALHHYLKTNDFEDTMRRYNG.

Position 15 (Tyr-15) interacts with tRNA. The active-site Proton acceptor is the His-20. TRNA contacts are provided by Phe-66, Asn-68, and Asn-114.

It belongs to the PTH family. Monomer.

It localises to the cytoplasm. The enzyme catalyses an N-acyl-L-alpha-aminoacyl-tRNA + H2O = an N-acyl-L-amino acid + a tRNA + H(+). In terms of biological role, hydrolyzes ribosome-free peptidyl-tRNAs (with 1 or more amino acids incorporated), which drop off the ribosome during protein synthesis, or as a result of ribosome stalling. Its function is as follows. Catalyzes the release of premature peptidyl moieties from peptidyl-tRNA molecules trapped in stalled 50S ribosomal subunits, and thus maintains levels of free tRNAs and 50S ribosomes. The chain is Peptidyl-tRNA hydrolase from Streptococcus thermophilus (strain CNRZ 1066).